A 251-amino-acid chain; its full sequence is PF03932 family protein CutC (251 aa).

This sequence belongs to the CutC family.

It localises to the cytoplasm. The polypeptide is PF03932 family protein CutC (Bacteroides fragilis (strain YCH46)).